Here is a 532-residue protein sequence, read N- to C-terminus: 2,3-bisphosphoglycerate-independent phosphoglycerate mutase (532 aa).

2 residues coordinate Mn(2+): Asp-15 and Ser-65. Ser-65 (phosphoserine intermediate) is an active-site residue. Substrate contacts are provided by residues His-126, 156–157, Arg-188, Arg-194, 258–261, and Lys-331; these read RD and RPDR. Mn(2+) is bound by residues Asp-398, His-402, Asp-439, His-440, and His-457.

This sequence belongs to the BPG-independent phosphoglycerate mutase family. In terms of assembly, monomer. Mn(2+) serves as cofactor.

The catalysed reaction is (2R)-2-phosphoglycerate = (2R)-3-phosphoglycerate. The protein operates within carbohydrate degradation; glycolysis; pyruvate from D-glyceraldehyde 3-phosphate: step 3/5. Functionally, catalyzes the interconversion of 2-phosphoglycerate and 3-phosphoglycerate. In Nostoc punctiforme (strain ATCC 29133 / PCC 73102), this protein is 2,3-bisphosphoglycerate-independent phosphoglycerate mutase.